The primary structure comprises 199 residues: Prolactin-1 (199 aa).

Cystine bridges form between Cys-4-Cys-11, Cys-58-Cys-174, and Cys-191-Cys-199. Asn-60 carries an N-linked (GlcNAc...) asparagine glycan.

This sequence belongs to the somatotropin/prolactin family. Glycosylated.

The protein resides in the secreted. The sequence is that of Prolactin-1 from Alligator mississippiensis (American alligator).